The following is a 126-amino-acid chain: Small ribosomal subunit protein bS6 (126 aa).

The tract at residues 107 to 126 is disordered; the sequence is RDRERGERSERPRDDFAPAA.

This sequence belongs to the bacterial ribosomal protein bS6 family.

Functionally, binds together with bS18 to 16S ribosomal RNA. The protein is Small ribosomal subunit protein bS6 of Caulobacter sp. (strain K31).